Consider the following 244-residue polypeptide: 5-oxoprolinase subunit A (244 aa).

This sequence belongs to the LamB/PxpA family. As to quaternary structure, forms a complex composed of PxpA, PxpB and PxpC.

It catalyses the reaction 5-oxo-L-proline + ATP + 2 H2O = L-glutamate + ADP + phosphate + H(+). Its function is as follows. Catalyzes the cleavage of 5-oxoproline to form L-glutamate coupled to the hydrolysis of ATP to ADP and inorganic phosphate. This is 5-oxoprolinase subunit A from Salmonella typhimurium (strain LT2 / SGSC1412 / ATCC 700720).